The chain runs to 228 residues: NAD(P)H-hydrate epimerase (228 aa).

Residues 9 to 209 (VRAVERLAHR…LLGLTPAFLA (201 aa)) form the YjeF N-terminal domain. 53–57 (NNGGD) is a (6S)-NADPHX binding site. The K(+) site is built by Asn54 and Asp115. Residues 119–125 (GIGLARP) and Asp148 contribute to the (6S)-NADPHX site. Ser151 is a binding site for K(+).

Belongs to the NnrE/AIBP family. K(+) serves as cofactor.

It carries out the reaction (6R)-NADHX = (6S)-NADHX. The catalysed reaction is (6R)-NADPHX = (6S)-NADPHX. Its function is as follows. Catalyzes the epimerization of the S- and R-forms of NAD(P)HX, a damaged form of NAD(P)H that is a result of enzymatic or heat-dependent hydration. This is a prerequisite for the S-specific NAD(P)H-hydrate dehydratase to allow the repair of both epimers of NAD(P)HX. The polypeptide is NAD(P)H-hydrate epimerase (Bordetella pertussis (strain CS)).